Here is a 182-residue protein sequence, read N- to C-terminus: Ribosome maturation factor RimM (182 aa).

The region spanning 102–182 (EEDDYYWKDL…RVEVDWDPGF (81 aa)) is the PRC barrel domain.

The protein belongs to the RimM family. In terms of assembly, binds ribosomal protein uS19.

The protein localises to the cytoplasm. Its function is as follows. An accessory protein needed during the final step in the assembly of 30S ribosomal subunit, possibly for assembly of the head region. Essential for efficient processing of 16S rRNA. May be needed both before and after RbfA during the maturation of 16S rRNA. It has affinity for free ribosomal 30S subunits but not for 70S ribosomes. The chain is Ribosome maturation factor RimM from Yersinia pseudotuberculosis serotype IB (strain PB1/+).